We begin with the raw amino-acid sequence, 458 residues long: MSVSSAPPSATPGFASEVRTTGLLALPLVLGHVSTGLIGFVDNVIAGHHGTATLAAVTIGTSLLWLPMLVPIGTLISLTASVSQLLGAGREREIGPLFRQALWLSLGLSALMFVFLSVVPPLLPTFGIAPDIVPGATAFLHAVRWGVPALTFYFCMRYLSEGMHWTLPTMLLGFGGLLVLAPVGYALTYGKFGFAEHGAEGLGMASAITMWVQASVFALYLWRARRFAHLQLFAHLEGPRWRAIGELLRTGLPIGITVLMEGGLFIVTALLIGRLGSTEAAAHQIAINVAQLCFMIPMGVAEATTVRVGHAVGRGDPQAMRRAAWAGYAIVLGTQALSASALLLGHDAIVGVYTDDVAVAALASVLLLFAATFQFPDGIQVLSAGALRGLKDTRVPMFLAMFSYWGVGMPIGAGLGLGLGWGPKGMWVGLILGLTVASILMGLRFRQTSRRLTATVTP.

A run of 12 helical transmembrane segments spans residues 21 to 43 (TGLL…FVDN), 58 to 80 (TIGT…SLTA), 101 to 123 (ALWL…PPLL), 138 to 160 (AFLH…RYLS), 167 to 189 (LPTM…ALTY), 199 to 221 (AEGL…ALYL), 251 to 273 (GLPI…LLIG), 288 to 310 (NVAQ…RVGH), 323 to 345 (AAWA…LLLG), 360 to 382 (AALA…IQVL), 395 to 417 (VPMF…GLGL), and 427 to 445 (WVGL…GLRF).

It belongs to the multi antimicrobial extrusion (MATE) (TC 2.A.66.1) family.

The protein localises to the cell inner membrane. In terms of biological role, multidrug efflux pump. The protein is Probable multidrug resistance protein NorM (norM) of Xanthomonas axonopodis pv. citri (strain 306).